Reading from the N-terminus, the 906-residue chain is MLSILKKLFGTANDRTVKKLFSEITKINSFEPAIKILSDAALKNKTVEFKEKLKNGATLDDILYEAFAVVREAASRVCGMRHFDVQLIGGIILHRGMIAEMRTGEGKTLVATLPAYLNALTEKGVHVVTVNDYLALRDSASMGKIYNFLGLSVGCIVAGMTDEAKRIAYNSDITHATNNELGFDYLRDNMKYSMQERVLRPFNFAIIDEVDSILIDEARTPIVISGPVNDNSALYGKIDKIVRLLNVSDFEKDEKLKTINLTEAGITHIESLLIKDGIIKPDTGLYDFENLNLVHYVNQALRAHHMFTIDVDYLVREGKVMIIDEFTGRVMEGRRYSEGLHQALEAKENVKIQNENQTLASITFQNYFRNYPKLAGMTGTSMTEASELKDIYNLDVVAVPTHNKVTRIDLDDEIYGSKQEKYDAILKLIKDCYNRGQPILVGTISIEKSEELSSILNKEKIPHKVLNAKFHEQEAFIIAQAGRFKAVTIATNMAGRGTDIMLGGNPEMLIEQFNKDHNYVAKTAEIKAQIAEEKQKVIETGGLFVIGTERHESRRIDNQLRGRSGRQGDPGKTQFFLSLDDDLMRIFASDRISGVLRTLGLKDGEAIHHPMISRSLEKAQQKVEEYNYEMRKNLLRFDDVMNDQRKIIYEQRTEIIKSKDSYGFLTSATEELAKKIVLTFIPVGSYREDWDIENLTVELHRIFSIKFDHNLVNKNDVTEEDITKLVIQMAHDIYKSKEEAYSSELMHNAVKYILLTTLDQVWKDHLYSLDHLRQGISLRAYAQKDPLSEYKREAFNLFEQMLNNLKELFIQTVYHFHIDLKHLQKEDISLEHKKLQKNMRESREDPAFSKYNAGNSIETYLKPVVSRVDPKDRKPDDPMSWGRVSRNELCPCGSGKKYKYCHGVNE.

ATP contacts are provided by residues glutamine 86, 104–108 (GEGKT), and aspartate 499. 4 residues coordinate Zn(2+): cysteine 890, cysteine 892, cysteine 901, and histidine 902.

It belongs to the SecA family. Monomer and homodimer. Part of the essential Sec protein translocation apparatus which comprises SecA, SecYEG and auxiliary proteins SecDF-YajC and YidC. Requires Zn(2+) as cofactor.

Its subcellular location is the cell inner membrane. It is found in the cytoplasm. It catalyses the reaction ATP + H2O + cellular proteinSide 1 = ADP + phosphate + cellular proteinSide 2.. Its function is as follows. Part of the Sec protein translocase complex. Interacts with the SecYEG preprotein conducting channel. Has a central role in coupling the hydrolysis of ATP to the transfer of proteins into and across the cell membrane, serving both as a receptor for the preprotein-SecB complex and as an ATP-driven molecular motor driving the stepwise translocation of polypeptide chains across the membrane. The sequence is that of Protein translocase subunit SecA from Rickettsia prowazekii (strain Madrid E).